The primary structure comprises 319 residues: Ribosomal RNA large subunit methyltransferase F (319 aa).

Belongs to the methyltransferase superfamily. METTL16/RlmF family.

Its subcellular location is the cytoplasm. The enzyme catalyses adenosine(1618) in 23S rRNA + S-adenosyl-L-methionine = N(6)-methyladenosine(1618) in 23S rRNA + S-adenosyl-L-homocysteine + H(+). In terms of biological role, specifically methylates the adenine in position 1618 of 23S rRNA. The chain is Ribosomal RNA large subunit methyltransferase F from Aliivibrio fischeri (strain ATCC 700601 / ES114) (Vibrio fischeri).